The sequence spans 104 residues: Large ribosomal subunit protein bL21 (104 aa).

The protein belongs to the bacterial ribosomal protein bL21 family. As to quaternary structure, part of the 50S ribosomal subunit. Contacts protein L20.

In terms of biological role, this protein binds to 23S rRNA in the presence of protein L20. The sequence is that of Large ribosomal subunit protein bL21 from Helicobacter pylori (strain Shi470).